Reading from the N-terminus, the 159-residue chain is Transcription elongation factor GreA (159 aa).

This sequence belongs to the GreA/GreB family.

Its function is as follows. Necessary for efficient RNA polymerase transcription elongation past template-encoded arresting sites. The arresting sites in DNA have the property of trapping a certain fraction of elongating RNA polymerases that pass through, resulting in locked ternary complexes. Cleavage of the nascent transcript by cleavage factors such as GreA or GreB allows the resumption of elongation from the new 3'terminus. GreA releases sequences of 2 to 3 nucleotides. The protein is Transcription elongation factor GreA of Orientia tsutsugamushi (strain Boryong) (Rickettsia tsutsugamushi).